The chain runs to 146 residues: Prostaglandin E synthase 3 (146 aa).

A CS domain is found at 1–76 (VFIEFCVEDS…ESGQAWPRLT (76 aa)). The tract at residues 110–146 (SEMMNNMGGDDDVDLPEVDGADDDSPDSDDEKMPDLE) is disordered. Over residues 118–139 (GDDDVDLPEVDGADDDSPDSDD) the composition is skewed to acidic residues.

This sequence belongs to the p23/wos2 family. As to quaternary structure, binds to telomerase. Binds to the progesterone receptor.

Its subcellular location is the cytoplasm. It catalyses the reaction prostaglandin H2 = prostaglandin E2. The protein operates within lipid metabolism; prostaglandin biosynthesis. In terms of biological role, molecular chaperone. This chain is Prostaglandin E synthase 3 (PTGES3), found in Gallus gallus (Chicken).